A 135-amino-acid chain; its full sequence is RxLR effector protein Avh5 (135 aa).

Positions 1–19 (MRLQFFLVMAVATLATISA) are cleaved as a signal peptide. A RxLR-dEER motif is present at residues 43 to 71 (RFLRTADTDIVYEPKVHNPGKKQVFIEDK). A 1,2-diacyl-sn-glycero-3-phospho-(1D-myo-inositol-3-phosphate)-binding residues include Lys81, Lys83, and Lys84.

It belongs to the RxLR effector family.

It localises to the secreted. Its subcellular location is the host cell. Its function is as follows. Effector that suppresses plant defense responses during the early stages of pathogen infection. Suppresses cell death induced by effectors and PAMPs in plant hosts. The polypeptide is RxLR effector protein Avh5 (Phytophthora sojae (Soybean stem and root rot agent)).